The following is a 54-amino-acid chain: UPF0391 membrane protein PFL_0093 (54 aa).

The next 2 helical transmembrane spans lie at 4 to 24 (WAITFLIIAIVAAVLGFGGIA) and 29 to 49 (GIAKILFVVFLVMFIASFFFG).

Belongs to the UPF0391 family.

It is found in the cell membrane. The polypeptide is UPF0391 membrane protein PFL_0093 (Pseudomonas fluorescens (strain ATCC BAA-477 / NRRL B-23932 / Pf-5)).